The primary structure comprises 433 residues: ATP-dependent RNA helicase SUB2 (433 aa).

Positions 1 to 17 are enriched in acidic residues; that stretch reads MSAENQEELLDYSDSEE. The interval 1 to 39 is disordered; the sequence is MSAENQEELLDYSDSEEIAVPTTTQAGEGESANDKEADK. A Q motif motif is present at residues 49-77; that stretch reads TGFRDFLLKPELLRAIGDCGFEHPSEVQQ. One can recognise a Helicase ATP-binding domain in the interval 80–255; that stretch reads IPQSILGTDV…KKFMQNPLEI (176 aa). Position 93–100 (93–100) interacts with ATP; sequence AKSGLGKT. Residues 202-205 carry the DEAD box motif; sequence DECD. Positions 267–428 constitute a Helicase C-terminal domain; it reads GLQQYYIKLE…EFPEEGVDPS (162 aa).

This sequence belongs to the DEAD box helicase family. DECD subfamily.

The protein resides in the nucleus. It catalyses the reaction ATP + H2O = ADP + phosphate + H(+). ATP-binding RNA helicase involved in transcription elongation and required for the export of mRNA out of the nucleus. SUB2 also plays a role in pre-mRNA splicing and spliceosome assembly. May be involved in rDNA and telomeric silencing, and maintenance of genome integrity. This Lodderomyces elongisporus (strain ATCC 11503 / CBS 2605 / JCM 1781 / NBRC 1676 / NRRL YB-4239) (Yeast) protein is ATP-dependent RNA helicase SUB2 (SUB2).